A 122-amino-acid chain; its full sequence is Small ribosomal subunit protein uS13 (122 aa).

The interval L96–K122 is disordered. The span at Q101–K122 shows a compositional bias: basic residues.

The protein belongs to the universal ribosomal protein uS13 family. Part of the 30S ribosomal subunit. Forms a loose heterodimer with protein S19. Forms two bridges to the 50S subunit in the 70S ribosome.

Functionally, located at the top of the head of the 30S subunit, it contacts several helices of the 16S rRNA. In the 70S ribosome it contacts the 23S rRNA (bridge B1a) and protein L5 of the 50S subunit (bridge B1b), connecting the 2 subunits; these bridges are implicated in subunit movement. Contacts the tRNAs in the A and P-sites. This Chlamydia trachomatis serovar L2 (strain ATCC VR-902B / DSM 19102 / 434/Bu) protein is Small ribosomal subunit protein uS13.